A 734-amino-acid chain; its full sequence is Threonine--tRNA ligase, cytoplasmic (734 aa).

The segment at Met-1 to Tyr-41 is disordered. The span at Gln-11 to Lys-30 shows a compositional bias: basic and acidic residues. Residues Ser-69–Leu-135 enclose the TGS domain. Residues Ser-195 and Ser-289 each carry the phosphoserine modification. Thr-297 and Thr-381 each carry phosphothreonine. A phosphoserine mark is found at Ser-453 and Ser-457. Thr-460 carries the post-translational modification Phosphothreonine. A Phosphoserine modification is found at Ser-605.

This sequence belongs to the class-II aminoacyl-tRNA synthetase family.

The protein localises to the cytoplasm. It carries out the reaction tRNA(Thr) + L-threonine + ATP = L-threonyl-tRNA(Thr) + AMP + diphosphate + H(+). This chain is Threonine--tRNA ligase, cytoplasmic (THS1), found in Saccharomyces cerevisiae (strain ATCC 204508 / S288c) (Baker's yeast).